Here is a 1556-residue protein sequence, read N- to C-terminus: Ubiquitin carboxyl-terminal hydrolase 47 (1556 aa).

Positions methionine 117–lysine 231 are disordered. Residues alanine 146 to lysine 156 are compositionally biased toward low complexity. Phosphoserine occurs at positions 172 and 173. Residues isoleucine 180–lysine 189 are compositionally biased toward low complexity. The span at glycine 191–proline 200 shows a compositional bias: basic and acidic residues. Positions threonine 208 to serine 219 are enriched in polar residues. The residue at position 238 (serine 238) is a Phosphoserine. Positions valine 396–valine 779 constitute a USP domain. Residue cysteine 405 is the Nucleophile of the active site. 2 stretches are compositionally biased toward polar residues: residues asparagine 628–glycine 642 and leucine 661–glutamine 673. Positions asparagine 628–glutamine 697 are disordered. Over residues serine 688–glutamine 697 the composition is skewed to low complexity. The active-site Proton acceptor is histidine 720. Positions glutamate 1087 to serine 1148 are disordered. The segment covering aspartate 1109 to glycine 1125 has biased composition (basic and acidic residues). Residues serine 1128 to serine 1141 show a composition bias toward low complexity. Residues serine 1131, serine 1132, serine 1140, serine 1141, serine 1199, serine 1201, and serine 1205 each carry the phosphoserine modification.

This sequence belongs to the peptidase C19 family. As to quaternary structure, interacts with ttk.

The protein resides in the nucleus. The catalysed reaction is Thiol-dependent hydrolysis of ester, thioester, amide, peptide and isopeptide bonds formed by the C-terminal Gly of ubiquitin (a 76-residue protein attached to proteins as an intracellular targeting signal).. Functionally, ubiquitin-specific protease that deubiquitinates target proteins to regulate different cellular and developmental pathways. Functions downstream of Dsor1/MEK to positively regulate the Ras/MAPK signaling pathway. Likely to modulate the pathway during various cellular and developmental processes including rl/MAPK activation by the receptors InR, Egfr and sevenless/sev. Functions in the post-translational stabilization of rl/MAPK levels in a mechanism that is independent of rl activity and opposes the activity of the E2 enzyme Unc6 and the putative E3 ligases poe, Ufd4 and Kcmf1, which mediate the ubiquitination and proteasomal degradation of rl. During eye development it may also act downstream of rl/MAPK to negatively regulate the Ras/MAPK signaling pathway by stabilizing the transcriptional repressor ttk and consequently inhibiting photoreceptor cell development. This suggests that at least during eye development, it may act in both the positive and negative regulation of the Ras/MAPK signaling pathway to mediate the development of different cell types. Positively regulates border follicle cell migration during oogenesis by mediating the deubiquitination and stabilization of slbo. In the wing disks it positively regulates wg signaling by stabilizing arm. Has an effect on position-effect variegation. This is Ubiquitin carboxyl-terminal hydrolase 47 from Drosophila melanogaster (Fruit fly).